Here is a 151-residue protein sequence, read N- to C-terminus: Acidic phospholipase A2 4 (151 aa).

Positions 1–27 are cleaved as a signal peptide; sequence MYPAHLLVLLAVCVSLLGAASIPARPL. Cystine bridges form between C38-C104, C54-C151, C56-C72, C71-C132, C78-C125, C88-C118, and C111-C123. Residues Y55, G57, and G59 each coordinate Ca(2+). The active site involves H75. D76 lines the Ca(2+) pocket. D126 is a catalytic residue.

This sequence belongs to the phospholipase A2 family. Group I subfamily. D49 sub-subfamily. Requires Ca(2+) as cofactor. Expressed by the venom gland.

It is found in the secreted. The enzyme catalyses a 1,2-diacyl-sn-glycero-3-phosphocholine + H2O = a 1-acyl-sn-glycero-3-phosphocholine + a fatty acid + H(+). Functionally, PLA2 catalyzes the calcium-dependent hydrolysis of the 2-acyl groups in 3-sn-phosphoglycerides. This chain is Acidic phospholipase A2 4, found in Tropidechis carinatus (Australian rough-scaled snake).